We begin with the raw amino-acid sequence, 147 residues long: UPF0275 protein PM0504 (147 aa).

This sequence belongs to the UPF0275 family.

The protein is UPF0275 protein PM0504 of Pasteurella multocida (strain Pm70).